Here is a 55-residue protein sequence, read N- to C-terminus: Large ribosomal subunit protein bL33 (55 aa).

Basic and acidic residues predominate over residues 1–11; that stretch reads MAKGGREKIKL. The interval 1 to 26 is disordered; that stretch reads MAKGGREKIKLESTAGTGHFYTTDKN.

The protein belongs to the bacterial ribosomal protein bL33 family.

This is Large ribosomal subunit protein bL33 from Methylibium petroleiphilum (strain ATCC BAA-1232 / LMG 22953 / PM1).